We begin with the raw amino-acid sequence, 141 residues long: Probable mobile endonuclease E (141 aa).

The segment at 115 to 141 is disordered; the sequence is KMSKSENRSAFNRRNQTQNIGGNQRKG. Positions 122–141 are enriched in polar residues; the sequence is RSAFNRRNQTQNIGGNQRKG.

This chain is Probable mobile endonuclease E (mobE), found in Escherichia coli (Bacteriophage T4).